A 370-amino-acid chain; its full sequence is 3-isopropylmalate dehydrogenase 2 (370 aa).

An NAD(+)-binding site is contributed by 77–90 (GPKWDAVPYEVRPE). Residues Arg-97, Arg-107, Arg-135, and Asp-226 each contribute to the substrate site. 3 residues coordinate Mg(2+): Asp-226, Asp-250, and Asp-254. 290–302 (GSAPDIAGKGLAN) provides a ligand contact to NAD(+).

Belongs to the isocitrate and isopropylmalate dehydrogenases family. LeuB type 1 subfamily. As to quaternary structure, homodimer. The cofactor is Mg(2+). Mn(2+) is required as a cofactor.

It is found in the cytoplasm. It carries out the reaction (2R,3S)-3-isopropylmalate + NAD(+) = 4-methyl-2-oxopentanoate + CO2 + NADH. It participates in amino-acid biosynthesis; L-leucine biosynthesis; L-leucine from 3-methyl-2-oxobutanoate: step 3/4. Functionally, catalyzes the oxidation of 3-carboxy-2-hydroxy-4-methylpentanoate (3-isopropylmalate) to 3-carboxy-4-methyl-2-oxopentanoate. The product decarboxylates to 4-methyl-2 oxopentanoate. This is 3-isopropylmalate dehydrogenase 2 from Bradyrhizobium diazoefficiens (strain JCM 10833 / BCRC 13528 / IAM 13628 / NBRC 14792 / USDA 110).